The primary structure comprises 154 residues: C-type lectin 16 (154 aa).

An N-terminal signal peptide occupies residues 1–20 (MALSLYLIAVICSLVGFTAS). The C-type lectin domain occupies 27-152 (DNRFCFPNVV…CASMRRFVCE (126 aa)). 2 cysteine pairs are disulfide-bonded: Cys-46–Cys-151 and Cys-123–Cys-143.

As to quaternary structure, (Microbial infection) Interacts with non-structural protein 1 of dengue virus type 2. Interacts with envelope protein E of dengue virus type 2. In terms of tissue distribution, female salivary gland (at protein level). Not detected in female carcass without salivary glands (at protein level). Not detected in male tissues (at protein level).

The protein localises to the secreted. Its function is as follows. Putative lectin. May have a regulatory role in mosquito immunity. Probably suppresses replication of dengue virus type 2 in mosquito salivary glands. This chain is C-type lectin 16, found in Aedes aegypti (Yellowfever mosquito).